A 479-amino-acid chain; its full sequence is NADH dehydrogenase [ubiquinone] flavoprotein 1, mitochondrial (479 aa).

G103–G112 is an NADH binding site. R216–T264 is a binding site for FMN. Positions 396, 399, 402, and 442 each coordinate [4Fe-4S] cluster.

The protein belongs to the complex I 51 kDa subunit family. As to quaternary structure, complex I is composed of about 45 different subunits. This is a component of the flavoprotein-sulfur (FP) fragment of the enzyme. Requires FMN as cofactor. [4Fe-4S] cluster is required as a cofactor.

It localises to the mitochondrion inner membrane. It catalyses the reaction a ubiquinone + NADH + 5 H(+)(in) = a ubiquinol + NAD(+) + 4 H(+)(out). Its function is as follows. Core subunit of the mitochondrial membrane respiratory chain NADH dehydrogenase (Complex I) that is believed to belong to the minimal assembly required for catalysis. Complex I functions in the transfer of electrons from NADH to the respiratory chain. The immediate electron acceptor for the enzyme is believed to be ubiquinone. The polypeptide is NADH dehydrogenase [ubiquinone] flavoprotein 1, mitochondrial (ndufv1) (Dictyostelium discoideum (Social amoeba)).